A 460-amino-acid polypeptide reads, in one-letter code: Ribosomal protein uS12 methylthiotransferase RimO (460 aa).

The 117-residue stretch at 18 to 134 folds into the MTTase N-terminal domain; the sequence is MKIHITSLGC…VTSIVAEVLR (117 aa). 6 residues coordinate [4Fe-4S] cluster: Cys27, Cys63, Cys97, Cys171, Cys175, and Cys178. The Radical SAM core domain occupies 157 to 387; sequence STPFHYAYVK…MVLQQEISLS (231 aa). One can recognise a TRAM domain in the interval 390-456; that stretch reads QEWIGKTLEV…HYDLMGEAID (67 aa).

Belongs to the methylthiotransferase family. RimO subfamily. [4Fe-4S] cluster is required as a cofactor.

The protein localises to the cytoplasm. It carries out the reaction L-aspartate(89)-[ribosomal protein uS12]-hydrogen + (sulfur carrier)-SH + AH2 + 2 S-adenosyl-L-methionine = 3-methylsulfanyl-L-aspartate(89)-[ribosomal protein uS12]-hydrogen + (sulfur carrier)-H + 5'-deoxyadenosine + L-methionine + A + S-adenosyl-L-homocysteine + 2 H(+). Its function is as follows. Catalyzes the methylthiolation of an aspartic acid residue of ribosomal protein uS12. This is Ribosomal protein uS12 methylthiotransferase RimO from Heliobacterium modesticaldum (strain ATCC 51547 / Ice1).